The sequence spans 600 residues: Proline--tRNA ligase (600 aa).

Belongs to the class-II aminoacyl-tRNA synthetase family. ProS type 1 subfamily. In terms of assembly, homodimer.

It localises to the cytoplasm. The catalysed reaction is tRNA(Pro) + L-proline + ATP = L-prolyl-tRNA(Pro) + AMP + diphosphate. Catalyzes the attachment of proline to tRNA(Pro) in a two-step reaction: proline is first activated by ATP to form Pro-AMP and then transferred to the acceptor end of tRNA(Pro). As ProRS can inadvertently accommodate and process non-cognate amino acids such as alanine and cysteine, to avoid such errors it has two additional distinct editing activities against alanine. One activity is designated as 'pretransfer' editing and involves the tRNA(Pro)-independent hydrolysis of activated Ala-AMP. The other activity is designated 'posttransfer' editing and involves deacylation of mischarged Ala-tRNA(Pro). The misacylated Cys-tRNA(Pro) is not edited by ProRS. In Synechococcus sp. (strain RCC307), this protein is Proline--tRNA ligase.